The following is a 103-amino-acid chain: Large ribosomal subunit protein uL24 (103 aa).

Belongs to the universal ribosomal protein uL24 family. Part of the 50S ribosomal subunit.

Its function is as follows. One of two assembly initiator proteins, it binds directly to the 5'-end of the 23S rRNA, where it nucleates assembly of the 50S subunit. One of the proteins that surrounds the polypeptide exit tunnel on the outside of the subunit. The chain is Large ribosomal subunit protein uL24 from Alkaliphilus metalliredigens (strain QYMF).